A 1790-amino-acid chain; its full sequence is MWSTVALCLLVGLSYVSSSSPAWKDNTEYVYSVNGRTLTGLEETADQYSGVFLEAKLHLSIRPDGKLQGRISEPKFAQILSQLPDGWKSEIPDSQISYKQLQLSQKPFQLVLENGLIKRLIVEKDTLNWEANIIKSIVSQFQMDLQGENALQNPTSSFPTNEYMDAVFKTMEETVTGKTETIYDIHRLPEYLVQSQPWIAPQYKLKGEGDLIEVIKSKNYTNARDRPSYHYGFGEIEESEPTANKMGQFFIRQSNSRAILTGKPSRYIIQSTYTVNKIMVNPILKNKEMGSITSMVNVTLLEINNQQQQPEELSNPLDIGNLVYTYGQPKNNQVHSKLNENLMEDSSSEESSEQEMTHRRFRRSANSLTKQWRESSEEWNQQQQQPRPQLTRAPHSPLLPSMVGYHGKSIKENKDFDIRQNVENLVTEISDEIKQSEKTISKHTLDKYTILNTLVRLMDEDDIQFVAEQMYSQMKNGQQRYTWSIFRDSVAEAGTGPALLNIKKWIETKKIQKTEAAQVIGTLAQSTRFPTEEYMRKFFELATETQVRQQETLNQTCILSYTNLVHKVYINRNESHNQFPVHAFGSFYTKKGREFVKTTVIPHLKQELEKAISNADNNKIHVMIRALGNIGHKSILNVFQPYFEGEKQVSQFQRLMMVACMDRLADCYPHIARSVFYKIYQNTAELPEIRVVAVHQLIRANPPVEMLQRMAQYTNTDSQEEVNAAVKSVIESSCKLESSKHAELRKAAQSARPLLTKKQYGMEQSYINLRDYVAEQMGLELHVQRTSHSSAESSFPKIMKFQLHQHNHGMKQHILSTGGMISSIRELLNVLYRQTEVFQQEKSQRSQEQGKDNEWSSANIARLMNYERDEREQLEAIIYAQVEDVQKLWSFDNQTLEHLPEVIRQQEEIYRQGKDFSYVKLKQLNEMALSFPTEMGLPFLYTYDVPVLMKVEGKIRALANPAISRNNKLTKPEQISTEIKARVTCTGKTQSHLSFVTPFDHQIYMAGYDKNMYVSIPVNARLEMDVKSKEAKIEFEVEQQQQDSRLVHITSTPYTSRSDVMAISPVALRPNTYVIKSHRNNHRYFDFNFGKKETGLTFRGWGHHPEQSIGFNDLVSMWQSRGVAGVWEQLWDKCSTEYSEATISFIPSQSTTRKATFRINVDQKYQKQPETQSPEDLLTLNQLSSKLQKDEPKQRQQEIKKHVGSGINSALLSCSDISLEFEGDKKYEHVVGFAVAKSNADPKSRVMFYYKNKNENKQGALEIRSEIPNTNGLNLDDSLDTEPSTKYNMRLQYGNSENDAFEISAQAQLSRSQERKQYLINQDPLYHVCKEQMQQKNFQLPACQNMTIKANFLDHIKYQVQYQKLNWKLVETLEGMFKGLRVLYYPMTEIKSISSVGQNVVEGEVQFQPEDFRQVNVTVRNTDEETVFFNISLNNELLRTLLVPHPVFHAKCRFAGLMQGQQNYRPTCVIDQTTAQTFSNKTYSVNLDKEPTVVMQYVPKDARVNGQQSKSVEQLLRESIENYVVLVRQVAANQKEVIINLNHPRTQGKTVKIEMKPSEDRQKSARNPAAKVTIDGQEMHFDDKQIADKCDGYVQVYALPNGEVKLEVEDAFYLIYDGQRVKVTATGNKLRDSVYGLCGRFSQDKHEDFTVPSNCVTRDTRKFVESYQVEKGQQWRNSPSEQCIKKVLPLYTNVISNQNGSQMRTKLASGTVMKHRYIEENGEICFTIRPLPVCNTSVKQVVTKNVPVHCIQGTKTAYYYKSLIDQGGNPDFSRKSETRTARMEVAAQCN.

The N-terminal stretch at 1-19 (MWSTVALCLLVGLSYVSSS) is a signal peptide. Residues 23–799 (WKDNTEYVYS…SAESSFPKIM (777 aa)) enclose the Vitellogenin domain. N-linked (GlcNAc...) asparagine glycosylation is found at N219 and N297. The segment covering 342–353 (LMEDSSSEESSE) has biased composition (acidic residues). The interval 342–400 (LMEDSSSEESSEQEMTHRRFRRSANSLTKQWRESSEEWNQQQQQPRPQLTRAPHSPLLP) is disordered. Residues 378–389 (EWNQQQQQPRPQ) are compositionally biased toward low complexity. N-linked (GlcNAc...) asparagine glycosylation is found at N554, N573, N893, N1345, N1416, N1430, N1480, N1699, and N1735. The VWFD domain maps to 1466-1675 (PTCVIDQTTA…SYQVEKGQQW (210 aa)). Residues C1468 and C1638 are joined by a disulfide bond.

Its subcellular location is the secreted. Functionally, precursor of the egg-yolk proteins that are sources of nutrients during embryonic development. In Anthonomus grandis (Mexican cotton boll weevil), this protein is Vitellogenin (VTG).